Here is a 164-residue protein sequence, read N- to C-terminus: Translocator protein homolog (164 aa).

The next 5 helical transmembrane spans lie at 16–34 (WSAS…NSYK), 52–72 (SAFG…SHLA), 89–106 (ILYI…PLFY), 112–132 (KLAL…AKTW), and 141–163 (KWLI…YCLL).

The protein belongs to the TspO/BZRP family.

Its subcellular location is the mitochondrion membrane. Its function is as follows. May play a role in the transport of porphyrins and heme. This Schizosaccharomyces pombe (strain 972 / ATCC 24843) (Fission yeast) protein is Translocator protein homolog.